The sequence spans 280 residues: Protease HtpX (280 aa).

2 consecutive transmembrane segments (helical) span residues 7–26 and 30–49; these read TFILLASLTALLVVIGGLLG and GMLVALLFAGIMNFSAYWYS. His129 serves as a coordination point for Zn(2+). Glu130 is a catalytic residue. His133 provides a ligand contact to Zn(2+). A run of 2 helical transmembrane segments spans residues 146 to 166 and 178 to 198; these read ATIAGAISGIANMFMWLSMFG and VVGMIMMIVAPLAAGLIQMAI. Glu203 provides a ligand contact to Zn(2+).

Belongs to the peptidase M48B family. Requires Zn(2+) as cofactor.

The protein resides in the cell inner membrane. The polypeptide is Protease HtpX (Legionella pneumophila (strain Lens)).